We begin with the raw amino-acid sequence, 180 residues long: Large ribosomal subunit protein uL5 (180 aa).

This sequence belongs to the universal ribosomal protein uL5 family. Part of the 50S ribosomal subunit; part of the 5S rRNA/L5/L18/L25 subcomplex. Contacts the 5S rRNA and the P site tRNA. Forms a bridge to the 30S subunit in the 70S ribosome.

Its function is as follows. This is one of the proteins that bind and probably mediate the attachment of the 5S RNA into the large ribosomal subunit, where it forms part of the central protuberance. In the 70S ribosome it contacts protein S13 of the 30S subunit (bridge B1b), connecting the 2 subunits; this bridge is implicated in subunit movement. Contacts the P site tRNA; the 5S rRNA and some of its associated proteins might help stabilize positioning of ribosome-bound tRNAs. The sequence is that of Large ribosomal subunit protein uL5 from Mycoplasma pneumoniae (strain ATCC 29342 / M129 / Subtype 1) (Mycoplasmoides pneumoniae).